Reading from the N-terminus, the 545-residue chain is Chaperonin GroEL (545 aa).

Residues 29–32 (TLGP), Lys50, 86–90 (DGTTT), Gly413, and Asp495 contribute to the ATP site.

This sequence belongs to the chaperonin (HSP60) family. As to quaternary structure, forms a cylinder of 14 subunits composed of two heptameric rings stacked back-to-back. Interacts with the co-chaperonin GroES.

It localises to the cytoplasm. The enzyme catalyses ATP + H2O + a folded polypeptide = ADP + phosphate + an unfolded polypeptide.. Its function is as follows. Together with its co-chaperonin GroES, plays an essential role in assisting protein folding. The GroEL-GroES system forms a nano-cage that allows encapsulation of the non-native substrate proteins and provides a physical environment optimized to promote and accelerate protein folding. In Borreliella burgdorferi (strain ATCC 35210 / DSM 4680 / CIP 102532 / B31) (Borrelia burgdorferi), this protein is Chaperonin GroEL.